The following is a 303-amino-acid chain: Glycine--tRNA ligase alpha subunit (303 aa).

The protein belongs to the class-II aminoacyl-tRNA synthetase family. In terms of assembly, tetramer of two alpha and two beta subunits.

The protein localises to the cytoplasm. The catalysed reaction is tRNA(Gly) + glycine + ATP = glycyl-tRNA(Gly) + AMP + diphosphate. The polypeptide is Glycine--tRNA ligase alpha subunit (Escherichia fergusonii (strain ATCC 35469 / DSM 13698 / CCUG 18766 / IAM 14443 / JCM 21226 / LMG 7866 / NBRC 102419 / NCTC 12128 / CDC 0568-73)).